A 153-amino-acid chain; its full sequence is 3-hydroxyacyl-[acyl-carrier-protein] dehydratase FabZ (153 aa).

Residue His-54 is part of the active site.

This sequence belongs to the thioester dehydratase family. FabZ subfamily.

It is found in the cytoplasm. It carries out the reaction a (3R)-hydroxyacyl-[ACP] = a (2E)-enoyl-[ACP] + H2O. Its function is as follows. Involved in unsaturated fatty acids biosynthesis. Catalyzes the dehydration of short chain beta-hydroxyacyl-ACPs and long chain saturated and unsaturated beta-hydroxyacyl-ACPs. This Shewanella frigidimarina (strain NCIMB 400) protein is 3-hydroxyacyl-[acyl-carrier-protein] dehydratase FabZ.